Reading from the N-terminus, the 210-residue chain is Protein-L-isoaspartate O-methyltransferase (210 aa).

Serine 59 is an active-site residue.

It belongs to the methyltransferase superfamily. L-isoaspartyl/D-aspartyl protein methyltransferase family.

It is found in the cytoplasm. It carries out the reaction [protein]-L-isoaspartate + S-adenosyl-L-methionine = [protein]-L-isoaspartate alpha-methyl ester + S-adenosyl-L-homocysteine. Its function is as follows. Catalyzes the methyl esterification of L-isoaspartyl residues in peptides and proteins that result from spontaneous decomposition of normal L-aspartyl and L-asparaginyl residues. It plays a role in the repair and/or degradation of damaged proteins. The sequence is that of Protein-L-isoaspartate O-methyltransferase from Nitratidesulfovibrio vulgaris (strain ATCC 29579 / DSM 644 / CCUG 34227 / NCIMB 8303 / VKM B-1760 / Hildenborough) (Desulfovibrio vulgaris).